The following is a 311-amino-acid chain: Coproporphyrin III ferrochelatase 1 (311 aa).

Fe-coproporphyrin III contacts are provided by residues Y12, R29, R45–Y46, S53, and Y124. The Fe(2+) site is built by H182 and E263.

It belongs to the ferrochelatase family.

The protein resides in the cytoplasm. It catalyses the reaction Fe-coproporphyrin III + 2 H(+) = coproporphyrin III + Fe(2+). The protein operates within porphyrin-containing compound metabolism; protoheme biosynthesis. Functionally, involved in coproporphyrin-dependent heme b biosynthesis. Catalyzes the insertion of ferrous iron into coproporphyrin III to form Fe-coproporphyrin III. This is Coproporphyrin III ferrochelatase 1 from Bacillus thuringiensis subsp. konkukian (strain 97-27).